A 234-amino-acid chain; its full sequence is MYQSKEERVHHVFEKIYKHYDRMNSVISFRRHLKWREDTMKRMNVQKGKKALDVCCGTADWTIALAEAVGPSGEVYGLDFSKNMLQVGEQKVKERQLANVKLIHGNAMNIPFPDNTFDYVTIGFGLRNVPDYMTVLKEMYRVVKPGGKVVCLETSQPTLIGFRQLYYFYFRFIMPLFGKLFAKSYEEYSWLQESARDFPGRDELAQMFRDAGFVDIEVKSYTFGVAAMHLGHKR.

S-adenosyl-L-methionine-binding positions include threonine 58, aspartate 79, and 106–107; that span reads NA.

The protein belongs to the class I-like SAM-binding methyltransferase superfamily. MenG/UbiE family.

The catalysed reaction is a 2-demethylmenaquinol + S-adenosyl-L-methionine = a menaquinol + S-adenosyl-L-homocysteine + H(+). Its pathway is quinol/quinone metabolism; menaquinone biosynthesis; menaquinol from 1,4-dihydroxy-2-naphthoate: step 2/2. Methyltransferase required for the conversion of demethylmenaquinol (DMKH2) to menaquinol (MKH2). The protein is Demethylmenaquinone methyltransferase of Geobacillus sp. (strain WCH70).